A 326-amino-acid polypeptide reads, in one-letter code: tRNA-modifying protein YgfZ (326 aa).

The folate site is built by W27 and W189.

This sequence belongs to the tRNA-modifying YgfZ family.

Its subcellular location is the cytoplasm. Functionally, folate-binding protein involved in regulating the level of ATP-DnaA and in the modification of some tRNAs. It is probably a key factor in regulatory networks that act via tRNA modification, such as initiation of chromosomal replication. This Salmonella paratyphi A (strain AKU_12601) protein is tRNA-modifying protein YgfZ.